The chain runs to 452 residues: Glycine receptor subunit alpha-2 (452 aa).

An N-terminal signal peptide occupies residues 1 to 27; it reads MNRQLVNILTALFAFFLGTNHFREAFC. Topologically, residues 28 to 256 are extracellular; sequence KDHDSRSGKH…KFHLERQMGY (229 aa). An N-linked (GlcNAc...) asparagine glycan is attached at N72. R99 lines the glycine pocket. R99 lines the strychnine pocket. The N-linked (GlcNAc...) asparagine glycan is linked to N103. S163 serves as a coordination point for glycine. Cysteines 172 and 186 form a disulfide. E226 and E228 together coordinate Zn(2+). Residues C232 and C243 are joined by a disulfide bond. Glycine is bound at residue T238. A Zn(2+)-binding site is contributed by H249. A helical membrane pass occupies residues 257–278; that stretch reads YLIQMYIPSLLIVILSWVSFWI. The Cytoplasmic portion of the chain corresponds to 279–283; it reads NMDAA. The helical transmembrane segment at 284-304 threads the bilayer; sequence PARVALGITTVLTMTTQSSGS. Residues 305–315 are Extracellular-facing; the sequence is RASLPKVSYVK. The helical transmembrane segment at 316–336 threads the bilayer; it reads AIDIWMAVCLLFVFAALLEYA. The Cytoplasmic segment spans residues 337-420; sequence AVNFVSRQHK…FVDRAKRIDT (84 aa). The helical transmembrane segment at 421–441 threads the bilayer; that stretch reads ISRAAFPLAFLIFNIFYWITY. The Extracellular segment spans residues 442–452; that stretch reads KIIRHEDVHKK.

It belongs to the ligand-gated ion channel (TC 1.A.9) family. Glycine receptor (TC 1.A.9.3) subfamily. GLRA2 sub-subfamily. Interacts with GLRB. Heteropentamer composed of GLRA2 and GLRB; functional GLRB-GLRA2 heteropentamers contain four GLRA2 subunits and one GLRB subunit, although alternative subunit composition cannot be excluded. Homopentamer (in vitro). Both homopentamers and heteropentamers form functional ion channels, but their characteristics are subtly different.

The protein resides in the postsynaptic cell membrane. It is found in the synapse. Its subcellular location is the cell membrane. It localises to the cell projection. It catalyses the reaction chloride(in) = chloride(out). With respect to regulation, channel opening is triggered by extracellular glycine. Channel opening is also triggered by taurine and beta-alanine. Inhibited by strychnine. Inhibited by picrotoxin. In terms of biological role, subunit of heteromeric glycine-gated chloride channels. Plays a role in synaptic plasticity. Contributes to the generation of inhibitory postsynaptic currents, and is involved in the down-regulation of neuronal excitability. Plays a role in cellular responses to ethanol. This is Glycine receptor subunit alpha-2 from Rattus norvegicus (Rat).